The chain runs to 685 residues: Amino acid transporter heavy chain SLC3A1 (685 aa).

Basic and acidic residues predominate over residues 1 to 11 (MAEDKSKRDSI). The disordered stretch occupies residues 1 to 56 (MAEDKSKRDSIEMSMKGCQTNNGFVHNEDILEQTPDPGSSTDNLKHSTRGILGSQE). The Cytoplasmic portion of the chain corresponds to 1–87 (MAEDKSKRDS…GQARYRIPRE (87 aa)). Serine 10 is modified (phosphoserine). A helical; Signal-anchor for type II membrane protein transmembrane segment spans residues 88-108 (ILFWLTVASVLVLIAATIAII). Over 109 to 685 (ALSPKCLDWW…SVLNILYTSC (577 aa)) the chain is Extracellular. Asparagine 214 lines the Ca(2+) pocket. N-linked (GlcNAc...) asparagine glycosylation is found at asparagine 214 and asparagine 261. Cysteine 242 and cysteine 273 are oxidised to a cystine. Residues aspartate 284, phenylalanine 318, leucine 319, and glutamate 321 each coordinate Ca(2+). N-linked (GlcNAc...) asparagine glycans are attached at residues asparagine 332, asparagine 495, asparagine 513, and asparagine 575. 2 disulfides stabilise this stretch: cysteine 571–cysteine 666 and cysteine 673–cysteine 685.

Disulfide-linked heterodimer composed of the catalytic light subunit SLC7A9 and the heavy subunit SLC3A1. The heterodimer is the minimal functional unit. Assembles in non-covalently linked heterotetramers (dimers of heterodimers) and higher order oligomers; the oligomerization is mediated by SLC3A1 likely to prevent degradation in the endoplasmic reticulum and facilitate heteromer trafficking to the plasma membrane. Disulfide-linked heterodimer composed of the catalytic light subunit SLC7A13 and the heavy subunit SLC3A1. Expressed in the brush border membrane in the kidney (at protein level). Predominantly expressed in the kidney, small intestine and pancreas. Weakly expressed in liver.

It localises to the cell membrane. It is found in the apical cell membrane. In terms of biological role, acts as a chaperone that facilitates biogenesis and trafficking of functional transporter heteromers to the plasma membrane. Associates with SLC7A9 to form a functional transporter complex that mediates the electrogenic exchange between cationic amino acids and neutral amino acids, with a stoichiometry of 1:1. SLC7A9-SLC3A1 transporter has system b(0,+)-like activity with high affinity for extracellular cationic amino acids and L-cystine and lower affinity for intracellular neutral amino acids. Substrate exchange is driven by high concentration of intracellular neutral amino acids and the intracellular reduction of L-cystine to L-cysteine. SLC7A9-SLC3A1 acts as a major transporter for reabsorption of L-cystine and dibasic amino acids across the brush border membrane in early proximal tubules. Associates with SLC7A13 to form a functional complex that transports anionic and neutral amino acids via exchange or facilitated diffusion. SLC7A13-SLC3A1 may act as a major transporter for L-cystine in late proximal tubules, ensuring its reabsorption from the luminal fluid in exchange for cytosolic L-glutamate or L-aspartate. This Homo sapiens (Human) protein is Amino acid transporter heavy chain SLC3A1.